The chain runs to 105 residues: NADH-quinone oxidoreductase subunit K (105 aa).

The next 3 membrane-spanning stretches (helical) occupy residues 9–29, 34–54, and 65–85; these read PNYY…GVLV, IVLF…LVTF, and IIAF…LAII.

This sequence belongs to the complex I subunit 4L family. NDH-1 is composed of 14 different subunits. Subunits NuoA, H, J, K, L, M, N constitute the membrane sector of the complex.

The protein localises to the cell membrane. The enzyme catalyses a quinone + NADH + 5 H(+)(in) = a quinol + NAD(+) + 4 H(+)(out). NDH-1 shuttles electrons from NADH, via FMN and iron-sulfur (Fe-S) centers, to quinones in the respiratory chain. The immediate electron acceptor for the enzyme in this species is believed to be a menaquinone. Couples the redox reaction to proton translocation (for every two electrons transferred, four hydrogen ions are translocated across the cytoplasmic membrane), and thus conserves the redox energy in a proton gradient. This chain is NADH-quinone oxidoreductase subunit K, found in Salinispora arenicola (strain CNS-205).